Reading from the N-terminus, the 304-residue chain is Probable WRKY transcription factor 29 (304 aa).

Disordered regions lie at residues 76 to 96 (LPEDSKPFRDDKKQRSHGCLL) and 185 to 236 (YTNE…IPSA). Residues 78–88 (EDSKPFRDDKK) are compositionally biased toward basic and acidic residues. Residues 128 to 194 (KEENLLSDAW…YTNEHNHELP (67 aa)) constitute a DNA-binding region (WRKY). Polar residues-rich tracts occupy residues 196–213 (RRNSLAGSTRAKTSQPKP) and 225–236 (SSPTSNPMIPSA).

The protein belongs to the WRKY group II-e family.

It is found in the nucleus. In terms of biological role, transcription factor involved in the expression of defense genes in innate immune response of plants. Interacts specifically with the W box (5'-(T)TGAC[CT]-3'), a frequently occurring elicitor-responsive cis-acting element. Activates WRKY 22, SIRK and its own promoters. The chain is Probable WRKY transcription factor 29 (WRKY29) from Arabidopsis thaliana (Mouse-ear cress).